Here is a 185-residue protein sequence, read N- to C-terminus: Ribosome-recycling factor (185 aa).

It belongs to the RRF family.

The protein resides in the cytoplasm. Functionally, responsible for the release of ribosomes from messenger RNA at the termination of protein biosynthesis. May increase the efficiency of translation by recycling ribosomes from one round of translation to another. In Bacillus cereus (strain ATCC 10987 / NRS 248), this protein is Ribosome-recycling factor.